Consider the following 331-residue polypeptide: MTEPLDAALRPKSLAEYVGQARLKEKLGVYLQAAKGRKEALDHTLLFGPPGLGKTTLAHIIAAELGVNIRVTSGPAIEKPGDLAAILTNSLEEGDVLFIDEIHRLGRVAEEHLYPAMEDFKLDIVLGQGPAARTIELPLPRFTLVGATTRPGLITAPMRSRFGIIEHLEYYTPEEIGTNLLRDARLLGFGLTEEAAIEIGARSRGTMRIAKRLLRRVRDYADVAGEKTIELERAQDALDKLGLDTAGLDERDKKYLETLIHRFAGGPVGVDTLATAISEDALTLEDVYEPYLIQLGFIKRTPRGRVATAHAYDHLGLPVGAAESDLGLYTN.

Residues 1–171 form a large ATPase domain (RuvB-L) region; sequence MTEPLDAALR…FGIIEHLEYY (171 aa). Residues leucine 9, arginine 10, glycine 51, lysine 54, threonine 55, threonine 56, 118 to 120, arginine 161, tyrosine 171, and arginine 208 each bind ATP; that span reads EDF. Residue threonine 55 participates in Mg(2+) binding. The interval 172 to 242 is small ATPAse domain (RuvB-S); that stretch reads TPEEIGTNLL…RAQDALDKLG (71 aa). Residues 245–331 form a head domain (RuvB-H) region; the sequence is TAGLDERDKK…AESDLGLYTN (87 aa). Residues arginine 300 and arginine 305 each coordinate DNA.

The protein belongs to the RuvB family. In terms of assembly, homohexamer. Forms an RuvA(8)-RuvB(12)-Holliday junction (HJ) complex. HJ DNA is sandwiched between 2 RuvA tetramers; dsDNA enters through RuvA and exits via RuvB. An RuvB hexamer assembles on each DNA strand where it exits the tetramer. Each RuvB hexamer is contacted by two RuvA subunits (via domain III) on 2 adjacent RuvB subunits; this complex drives branch migration. In the full resolvosome a probable DNA-RuvA(4)-RuvB(12)-RuvC(2) complex forms which resolves the HJ.

Its subcellular location is the cytoplasm. It carries out the reaction ATP + H2O = ADP + phosphate + H(+). The RuvA-RuvB-RuvC complex processes Holliday junction (HJ) DNA during genetic recombination and DNA repair, while the RuvA-RuvB complex plays an important role in the rescue of blocked DNA replication forks via replication fork reversal (RFR). RuvA specifically binds to HJ cruciform DNA, conferring on it an open structure. The RuvB hexamer acts as an ATP-dependent pump, pulling dsDNA into and through the RuvAB complex. RuvB forms 2 homohexamers on either side of HJ DNA bound by 1 or 2 RuvA tetramers; 4 subunits per hexamer contact DNA at a time. Coordinated motions by a converter formed by DNA-disengaged RuvB subunits stimulates ATP hydrolysis and nucleotide exchange. Immobilization of the converter enables RuvB to convert the ATP-contained energy into a lever motion, pulling 2 nucleotides of DNA out of the RuvA tetramer per ATP hydrolyzed, thus driving DNA branch migration. The RuvB motors rotate together with the DNA substrate, which together with the progressing nucleotide cycle form the mechanistic basis for DNA recombination by continuous HJ branch migration. Branch migration allows RuvC to scan DNA until it finds its consensus sequence, where it cleaves and resolves cruciform DNA. The chain is Holliday junction branch migration complex subunit RuvB from Deinococcus geothermalis (strain DSM 11300 / CIP 105573 / AG-3a).